Here is a 306-residue protein sequence, read N- to C-terminus: MELKDYYAIMGVKPTDDLKTIKTAYRRLARKYHPDVSKEPDAEARFKEVAEAWEVLSDEQRRAEYDQMWQHRNDPQFNRQFHHGDGQSFNAEDFDDIFSSIFGQHARQSRQRPAARGHDIEIEVAVFLEETLTEHKRTISYNLPVYNAFGMIEQEIPKTLNVKIPAGVGNGQRIRLKGQGTPGENGGPNGDLWLVIHIAPHPLFDIVGQDLEIVVPVSPWEAALGTKVTVPTLKESILLTIPPGSQAGQRLRVKGKGLVSKKQTGDLYAVLKIVMPPKPDENTAALWQQLADAQSSFDPRKDWGKA.

One can recognise a J domain in the interval 5 to 69 (DYYAIMGVKP…QRRAEYDQMW (65 aa)).

It is found in the cytoplasm. The protein localises to the nucleoid. Functionally, DNA-binding protein that preferentially recognizes a curved DNA sequence. It is probably a functional analog of DnaJ; displays overlapping activities with DnaJ, but functions under different conditions, probably acting as a molecular chaperone in an adaptive response to environmental stresses other than heat shock. Lacks autonomous chaperone activity; binds native substrates and targets them for recognition by DnaK. Its activity is inhibited by the binding of CbpM. In Shigella flexneri, this protein is Curved DNA-binding protein.